The primary structure comprises 409 residues: NDP-glycosyltransferase ltbB (409 aa).

The N-linked (GlcNAc...) asparagine glycan is linked to N36. Residues 319–339 (IWAFAYVWAWLQTLYTAPWIA) traverse the membrane as a helical segment.

The protein belongs to the GT2 glycosyltransferase family.

The protein localises to the membrane. Its pathway is secondary metabolite biosynthesis. NDP-glycosyltransferase; part of the gene cluster that mediates the biosynthesis of luteodienoside A, a glycosylated polyketide consisting of an unusual 1-O-beta-D-glucopyranosyl-myo-inositol (glucinol) ester of 3-hydroxy-2,2,4-trimethylocta-4,6-dienoic acid. LtbB likely serves as a glucinol synthase by transferring D-glucose to myo-inositol using NDP-glucose as a substrate. The ltbA carnitine O-acyltransferase (cAT) domain uses glucinol produced by the glycosyltransferase ltbB as an offloading substrate to release luteodienoside A from the HR-PKS. Since ltbA and ltbB are sufficient for the biosynthesis of luteodienoside A, the functions of the methyltransferase ltbC and the FAD-binding monooxygenase ltbD within the pathway remain obscur. This chain is NDP-glycosyltransferase ltbB, found in Aspergillus luteorubrus.